The sequence spans 742 residues: Two-component response regulator-like PRR37 (742 aa).

The Response regulatory domain occupies 63-181 (KVLLVDSDDS…ELKNLWQHVW (119 aa)). The span at 186–195 (SSSGSGSESG) shows a compositional bias: low complexity. Disordered stretches follow at residues 186–249 (SSSG…SWTK), 290–346 (PCTS…PLQN), 377–402 (QQAARAANAPNCSSKVPEGKDKNRDN), 478–517 (MKSNSDAAPIKQGSNGSSNNNDMGSTTKNVVTKPSTNKER), 533–568 (FHPAQHWTSPANTTGKEKTDEVANNAAKRAQPGEVQ), 590–671 (NGGS…GNDM), and 697–742 (NFGK…AADR). Residues 236 to 248 (DNGSGTQAQSSWT) show a composition bias toward polar residues. The span at 299–313 (KQKETNDDFKGKDLE) shows a compositional bias: basic and acidic residues. Residues 318–330 (RNLNTAYQSSPNE) are compositionally biased toward polar residues. Residues 331–341 (RSIKPTDRRNE) show a composition bias toward basic and acidic residues. Positions 490-502 (GSNGSSNNNDMGS) are enriched in low complexity. Residues 503-512 (TTKNVVTKPS) show a composition bias toward polar residues. Positions 618–634 (NGSNSGSNNGSNGQNGS) are enriched in low complexity. Residues 656 to 667 (GPGGGNGSGSGS) are compositionally biased toward gly residues. Residues 682 to 724 (RVAAVIKFRQKRKERNFGKKVRYQSRKRLAEQRPRVRGQFVRQ) form the CCT domain. Over residues 697 to 708 (NFGKKVRYQSRK) the composition is skewed to basic residues. Low complexity predominate over residues 719 to 731 (GQFVRQAVQDQQQ).

The protein belongs to the ARR-like family.

The protein resides in the nucleus. Probable transcription factor involved in the regulation of flowering time under long day (LD) conditions. Functions as a repressor of flowering. Controls flowering time by negatively regulating the expression of HD3A. Acts downstream of the phytochrome B to repress the expression of EHD1, an activator of the flowering promoter genes HD3A and RFT1. Controls photoperiodic flowering response. Seems to be one of the component of the circadian clock. Expression of several members of the ARR-like family is controlled by circadian rhythm. The particular coordinated sequential expression of PRR73, PRR37, PRR95, PRR59 and PPR1 result to circadian waves that may be at the basis of the endogenous circadian clock. The protein is Two-component response regulator-like PRR37 of Oryza sativa subsp. japonica (Rice).